The following is an 833-amino-acid chain: Leucine--tRNA ligase (833 aa).

The short motif at 41-52 (PYPSGAGLHVGH) is the 'HIGH' region element. A 'KMSKS' region motif is present at residues 610–614 (KMSKS). Lysine 613 provides a ligand contact to ATP.

It belongs to the class-I aminoacyl-tRNA synthetase family.

It localises to the cytoplasm. The enzyme catalyses tRNA(Leu) + L-leucine + ATP = L-leucyl-tRNA(Leu) + AMP + diphosphate. This Streptococcus pneumoniae serotype 4 (strain ATCC BAA-334 / TIGR4) protein is Leucine--tRNA ligase.